The primary structure comprises 777 residues: Zygote defective protein 12 (777 aa).

Composition is skewed to basic and acidic residues over residues 1 to 10 (MLDLTNKESE) and 18 to 36 (KYED…PFKE). A disordered region spans residues 1–36 (MLDLTNKESESSDNGNSKYEDSIDGREVGTSKPFKE). An interaction with dli-1 region spans residues 1-234 (MLDLTNKESE…ESSGKLNGNG (234 aa)). Residues 44-169 (QADLADMAVW…VTLAHIGKNA (126 aa)) form the Calponin-homology (CH) domain. 2 disordered regions span residues 217 to 242 (QSEL…RSNA) and 273 to 292 (SFET…DISI). Over residues 218–235 (SELNSLSESSGKLNGNGS) the composition is skewed to low complexity. Coiled-coil stretches lie at residues 236 to 399 (SERR…HHVK) and 425 to 688 (NTEL…QENR). A compositionally biased stretch (polar residues) spans 273–288 (SFETAQHDMSSNSESG). A helical membrane pass occupies residues 747–767 (AMASILVLGFLVFIAWMFINI). The interaction with unc-84 stretch occupies residues 749 to 777 (ASILVLGFLVFIAWMFININSALNAPPNA).

Belongs to the hook family. Homodimer. Interacts with the dynein subunit dli-1 via its N-terminus. May interact with microtubules. Interacts with sut-2. Interacts (via C-terminus) with unc-84 (via C-terminus); the interaction is direct. In terms of tissue distribution, expressed in the syncytial gonad, oocytes, and in all cells during the development of the early embryo.

The protein resides in the nucleus membrane. Its subcellular location is the cytoplasm. It is found in the cytoskeleton. It localises to the microtubule organizing center. The protein localises to the centrosome. Its function is as follows. Cytoskeletal linker protein, which is essential for attachment of the centrosome to the nucleus. Required for dynein localization to the nuclear envelope. Forms a LINC (LInker of Nucleoskeleton and Cytoskeleton) complex together with unc-84, that may be involved in DNA damage repair. The chain is Zygote defective protein 12 from Caenorhabditis elegans.